Here is a 425-residue protein sequence, read N- to C-terminus: Serine--tRNA ligase (425 aa).

231 to 233 (TAE) is an L-serine binding site. ATP is bound at residue 262–264 (RRE). Glu-285 lines the L-serine pocket. Position 349–352 (349–352 (EISS)) interacts with ATP. Ser-385 provides a ligand contact to L-serine.

It belongs to the class-II aminoacyl-tRNA synthetase family. Type-1 seryl-tRNA synthetase subfamily. As to quaternary structure, homodimer. The tRNA molecule binds across the dimer.

The protein resides in the cytoplasm. The enzyme catalyses tRNA(Ser) + L-serine + ATP = L-seryl-tRNA(Ser) + AMP + diphosphate + H(+). It catalyses the reaction tRNA(Sec) + L-serine + ATP = L-seryl-tRNA(Sec) + AMP + diphosphate + H(+). It participates in aminoacyl-tRNA biosynthesis; selenocysteinyl-tRNA(Sec) biosynthesis; L-seryl-tRNA(Sec) from L-serine and tRNA(Sec): step 1/1. Catalyzes the attachment of serine to tRNA(Ser). Is also able to aminoacylate tRNA(Sec) with serine, to form the misacylated tRNA L-seryl-tRNA(Sec), which will be further converted into selenocysteinyl-tRNA(Sec). This chain is Serine--tRNA ligase, found in Aquifex aeolicus (strain VF5).